A 794-amino-acid chain; its full sequence is Protein sel-1 homolog 1 (794 aa).

An N-terminal signal peptide occupies residues 1 to 21; sequence MRVRIGLTLLLCAVLLSLASA. The interval 21 to 50 is disordered; sequence ASSDEEGSQDESLDSKTTLTSDESVKDHTT. The interval 22-737 is interaction with ERLEC1, OS9 and SYVN1; it reads SSDEEGSQDE…DMFTQLDMDQ (716 aa). Over 22–738 the chain is Lumenal; it reads SSDEEGSQDE…MFTQLDMDQL (717 aa). Positions 23 to 32 are enriched in acidic residues; it reads SDEEGSQDES. Phosphoserine is present on Ser-63. Positions 64-77 are enriched in acidic residues; it reads EESELESSIQEEED. The segment at 64–109 is disordered; sequence EESELESSIQEEEDSLKSQEGESVTEDISFLESPNPENKDYEEPKK. Positions 122–170 constitute a Fibronectin type-II domain; that stretch reads AHGEPCHFPFLFLDKEYDECTSDGREDGRLWCATTYDYKADEKWGFCET. Cystine bridges form between Cys-127-Cys-153 and Cys-141-Cys-168. Sel1-like repeat units follow at residues 183–218, 219–254, 255–290, 291–326, 373–409, 410–446, 447–482, 483–518, and 519–554; these read AEMMYQTGMKILNGSNKKSQKREAYRYLQKAASMNH, TKALERVSYALLFGDYLPQNIQAAREMFEKLTEEGS, PKGQTALGFLYASGLGVNSSQAKALVYYTFGALGGN, LIAHMVLGYRYWAGIGVLQSCESALTHYRLVANHVA, VQAQVGLGQLHLHGGRGVEQNHQRAFDYFNLAANAGN, SHAMAFLGKMYSEGSDIVPQSNETALHYFKKAADMGN, PVGQSGLGMAYLYGRGVQVNYDLALKYFQKAAEQGW, VDGQLQLGSMYYNGIGVKRDYKQALKYFNLASQGGH, and ILAFYNLAQMHASGTGVMRSCHTAVELFKNVCERGR. N-linked (GlcNAc...) asparagine glycans are attached at residues Asn-195 and Asn-217. The N-linked (GlcNAc...) asparagine glycan is linked to Asn-272. The important for homodimerization and oligomerization stretch occupies residues 352 to 537; that stretch reads NSGMLEEDLI…MHASGTGVMR (186 aa). The N-linked (GlcNAc...) asparagine glycan is linked to Asn-431. An N-linked (GlcNAc...) asparagine glycan is attached at Asn-608. 2 Sel1-like repeats span residues 627-662 and 664-699; these read TVARIKLGDYHFYGFGTDVDYETAFIHYRLASEQQH and AQAMFNLGYMHEKGLGIKQDIHLAKRFYDMAAEASP. Residues 643–723 form an interaction with SYVN1 region; that stretch reads TDVDYETAFI…VVYFLQYIRE (81 aa). The segment at 738–794 is mediates retention in the endoplasmic reticulum; that stretch reads LLGPEWDLYLMTIIALLLGTVIAYRQRQHQDMPAPRPPGPRPAPPQQEGPPEQQPPQ. A helical membrane pass occupies residues 739–759; it reads LGPEWDLYLMTIIALLLGTVI. Residues 760–794 lie on the Cytoplasmic side of the membrane; the sequence is AYRQRQHQDMPAPRPPGPRPAPPQQEGPPEQQPPQ. The disordered stretch occupies residues 766 to 794; that stretch reads HQDMPAPRPPGPRPAPPQQEGPPEQQPPQ. Residues 771-794 show a composition bias toward pro residues; the sequence is APRPPGPRPAPPQQEGPPEQQPPQ.

The protein belongs to the sel-1 family. As to quaternary structure, homodimer and homooligomer. May form a complex with ERLEC1, HSPA5, OS9, and SYVN1. Interacts with FOXRED2 and EDEM1. Interacts with LPL. Interacts with LMF1; may stabilize the complex formed by LPL and LMF1 and thereby promote the export of LPL dimers. Component of the HRD1 complex, which comprises at least SYNV1/HRD1, DERL1/2, FAM8A1, HERPUD1/HERP, OS9, SEL1L and UBE2J1. SYNV1 assembles with SEL1L and FAM8A1 through its transmembrane domains, but interaction with its cytoplasmic domain is required to confer stability to FAM8A1 and enhance recruitment of HERPUD1. The interaction with SYNV1/HRD1 is direct. In terms of assembly, (Microbial infection) Interacts with human cytomegalovirus protein UL148. Post-translationally, N-glycosylated. As to expression, highly expressed in pancreas.

The protein resides in the endoplasmic reticulum membrane. Its function is as follows. Plays a role in the endoplasmic reticulum quality control (ERQC) system also called ER-associated degradation (ERAD) involved in ubiquitin-dependent degradation of misfolded endoplasmic reticulum proteins. Enhances SYVN1 stability. Plays a role in LPL maturation and secretion. Required for normal differentiation of the pancreas epithelium, and for normal exocrine function and survival of pancreatic cells. May play a role in Notch signaling. The protein is Protein sel-1 homolog 1 of Homo sapiens (Human).